A 131-amino-acid polypeptide reads, in one-letter code: Small ribosomal subunit protein uS8 (131 aa).

This sequence belongs to the universal ribosomal protein uS8 family. In terms of assembly, part of the 30S ribosomal subunit. Contacts proteins S5 and S12.

One of the primary rRNA binding proteins, it binds directly to 16S rRNA central domain where it helps coordinate assembly of the platform of the 30S subunit. The polypeptide is Small ribosomal subunit protein uS8 (Ruthia magnifica subsp. Calyptogena magnifica).